An 873-amino-acid polypeptide reads, in one-letter code: Alanine--tRNA ligase (873 aa).

Residues His563, His567, Cys665, and His669 each coordinate Zn(2+).

It belongs to the class-II aminoacyl-tRNA synthetase family. Requires Zn(2+) as cofactor.

It is found in the cytoplasm. The catalysed reaction is tRNA(Ala) + L-alanine + ATP = L-alanyl-tRNA(Ala) + AMP + diphosphate. In terms of biological role, catalyzes the attachment of alanine to tRNA(Ala) in a two-step reaction: alanine is first activated by ATP to form Ala-AMP and then transferred to the acceptor end of tRNA(Ala). Also edits incorrectly charged Ser-tRNA(Ala) and Gly-tRNA(Ala) via its editing domain. This Parabacteroides distasonis (strain ATCC 8503 / DSM 20701 / CIP 104284 / JCM 5825 / NCTC 11152) protein is Alanine--tRNA ligase.